Reading from the N-terminus, the 80-residue chain is Small ribosomal subunit protein uS17c (80 aa).

The protein belongs to the universal ribosomal protein uS17 family. Part of the 30S ribosomal subunit.

The protein localises to the plastid. Its subcellular location is the chloroplast. Its function is as follows. One of the primary rRNA binding proteins, it binds specifically to the 5'-end of 16S ribosomal RNA. The sequence is that of Small ribosomal subunit protein uS17c (rps17) from Gracilaria tenuistipitata var. liui (Red alga).